Consider the following 195-residue polypeptide: Imidazoleglycerol-phosphate dehydratase (195 aa).

This sequence belongs to the imidazoleglycerol-phosphate dehydratase family.

The protein localises to the cytoplasm. It carries out the reaction D-erythro-1-(imidazol-4-yl)glycerol 3-phosphate = 3-(imidazol-4-yl)-2-oxopropyl phosphate + H2O. Its pathway is amino-acid biosynthesis; L-histidine biosynthesis; L-histidine from 5-phospho-alpha-D-ribose 1-diphosphate: step 6/9. The chain is Imidazoleglycerol-phosphate dehydratase from Citrifermentans bemidjiense (strain ATCC BAA-1014 / DSM 16622 / JCM 12645 / Bem) (Geobacter bemidjiensis).